Reading from the N-terminus, the 345-residue chain is Methionine import ATP-binding protein MetN (345 aa).

One can recognise an ABC transporter domain in the interval 2–241 (IKLKNISKIF…PKTELAQEFI (240 aa)). 38–45 (GASGAGKS) contacts ATP.

Belongs to the ABC transporter superfamily. Methionine importer (TC 3.A.1.24) family. The complex is composed of two ATP-binding proteins (MetN), two transmembrane proteins (MetI) and a solute-binding protein (MetQ).

It localises to the cell inner membrane. The catalysed reaction is L-methionine(out) + ATP + H2O = L-methionine(in) + ADP + phosphate + H(+). It catalyses the reaction D-methionine(out) + ATP + H2O = D-methionine(in) + ADP + phosphate + H(+). Functionally, part of the ABC transporter complex MetNIQ involved in methionine import. Responsible for energy coupling to the transport system. The sequence is that of Methionine import ATP-binding protein MetN from Mannheimia succiniciproducens (strain KCTC 0769BP / MBEL55E).